Reading from the N-terminus, the 378-residue chain is Probable methyltransferase At1g29790 (378 aa).

The Cytoplasmic segment spans residues Met-1–Met-6. A helical; Signal-anchor for type II membrane protein transmembrane segment spans residues Ser-7–Ser-29. The Lumenal portion of the chain corresponds to Thr-30–Arg-378. The interval Thr-67–Ser-87 is disordered. The span at Ser-74–Ser-87 shows a compositional bias: low complexity. N-linked (GlcNAc...) asparagine glycosylation occurs at Asn-247.

This sequence belongs to the methyltransferase superfamily.

The protein localises to the golgi apparatus membrane. The sequence is that of Probable methyltransferase At1g29790 from Arabidopsis thaliana (Mouse-ear cress).